Here is a 349-residue protein sequence, read N- to C-terminus: NAC domain-containing protein JA2 (349 aa).

One can recognise an NAC domain in the interval 14–163; it reads LPPGFRFYPT…EWVLCRIYKK (150 aa). Residues 111–169 mediate DNA binding; sequence VGIKKALVFYVGKAPKGSKTNWIMHEYRLFESSRKNNGSSKLDEWVLCRIYKKNSSGPK. The disordered stretch occupies residues 169–194; the sequence is KPLMSGLHSSNEYSHGSSTSSSSQFD. Residues 177 to 191 show a composition bias toward low complexity; that stretch reads SSNEYSHGSSTSSSS.

Expressed in guard cells of the epidermis.

It localises to the nucleus. In terms of biological role, transcription factor involved in abscisic acid-mediated stomatal closure. Regulates the expression of NCED1, a gene involved in the biosynthesis of abscisic acid (ABA). Required for the stomatal closure induced by the bacterial pathogen Pseudomonas syringae pv tomato DC3000, but not for stomatal reopening. This Solanum lycopersicum (Tomato) protein is NAC domain-containing protein JA2.